A 118-amino-acid chain; its full sequence is Large ribosomal subunit protein bL19 (118 aa).

It belongs to the bacterial ribosomal protein bL19 family.

This protein is located at the 30S-50S ribosomal subunit interface and may play a role in the structure and function of the aminoacyl-tRNA binding site. In Marinobacter nauticus (strain ATCC 700491 / DSM 11845 / VT8) (Marinobacter aquaeolei), this protein is Large ribosomal subunit protein bL19.